Consider the following 209-residue polypeptide: Methylated-DNA--protein-cysteine methyltransferase (209 aa).

Zn(2+) is bound at residue Cys-5. Phosphoserine is present on Ser-14. Zn(2+)-binding residues include Cys-24, His-29, and His-89. Thr-99, Tyr-118, Gln-119, Asn-127, and Arg-132 together coordinate DNA. Cys-149 serves as the catalytic Nucleophile; methyl group acceptor. Ser-155 provides a ligand contact to DNA.

It belongs to the MGMT family. It depends on Zn(2+) as a cofactor.

The protein localises to the nucleus. The enzyme catalyses a 6-O-methyl-2'-deoxyguanosine in DNA + L-cysteinyl-[protein] = S-methyl-L-cysteinyl-[protein] + a 2'-deoxyguanosine in DNA. It carries out the reaction a 4-O-methyl-thymidine in DNA + L-cysteinyl-[protein] = a thymidine in DNA + S-methyl-L-cysteinyl-[protein]. Functionally, involved in the cellular defense against the biological effects of O6-methylguanine (O6-MeG) and O4-methylthymine (O4-MeT) in DNA. Repairs the methylated nucleobase in DNA by stoichiometrically transferring the methyl group to a cysteine residue in the enzyme. This is a suicide reaction: the enzyme is irreversibly inactivated. The protein is Methylated-DNA--protein-cysteine methyltransferase (Mgmt) of Rattus norvegicus (Rat).